A 163-amino-acid chain; its full sequence is Ribosome maturation factor RimP (163 aa).

The protein belongs to the RimP family.

It localises to the cytoplasm. Required for maturation of 30S ribosomal subunits. The sequence is that of Ribosome maturation factor RimP from Streptococcus mutans serotype c (strain ATCC 700610 / UA159).